Reading from the N-terminus, the 225-residue chain is Uracil-DNA glycosylase (225 aa).

Asp65 acts as the Proton acceptor in catalysis.

Belongs to the uracil-DNA glycosylase (UDG) superfamily. UNG family.

Its subcellular location is the cytoplasm. It catalyses the reaction Hydrolyzes single-stranded DNA or mismatched double-stranded DNA and polynucleotides, releasing free uracil.. Its function is as follows. Excises uracil residues from the DNA which can arise as a result of misincorporation of dUMP residues by DNA polymerase or due to deamination of cytosine. The polypeptide is Uracil-DNA glycosylase (Bacillus cereus (strain AH820)).